The following is a 309-amino-acid chain: Aspartate carbamoyltransferase catalytic subunit (309 aa).

Residues Arg-59 and Thr-60 each contribute to the carbamoyl phosphate site. Lys-87 provides a ligand contact to L-aspartate. Residues Arg-109, His-139, and Gln-142 each coordinate carbamoyl phosphate. Residues Arg-172 and Arg-224 each coordinate L-aspartate. 2 residues coordinate carbamoyl phosphate: Ala-265 and Pro-266.

The protein belongs to the aspartate/ornithine carbamoyltransferase superfamily. ATCase family. Heterododecamer (2C3:3R2) of six catalytic PyrB chains organized as two trimers (C3), and six regulatory PyrI chains organized as three dimers (R2).

It catalyses the reaction carbamoyl phosphate + L-aspartate = N-carbamoyl-L-aspartate + phosphate + H(+). It functions in the pathway pyrimidine metabolism; UMP biosynthesis via de novo pathway; (S)-dihydroorotate from bicarbonate: step 2/3. Functionally, catalyzes the condensation of carbamoyl phosphate and aspartate to form carbamoyl aspartate and inorganic phosphate, the committed step in the de novo pyrimidine nucleotide biosynthesis pathway. The polypeptide is Aspartate carbamoyltransferase catalytic subunit (Streptococcus uberis (strain ATCC BAA-854 / 0140J)).